The primary structure comprises 318 residues: Taste receptor type 2 member 60 (318 aa).

The Extracellular portion of the chain corresponds to 1–7; that stretch reads MNGDHMV. The chain crosses the membrane as a helical span at residues 8–28; that stretch reads LGSSVTDKKAIILVTILLLLR. Residues 29-40 lie on the Cytoplasmic side of the membrane; it reads LVAIAGNGFITA. The helical transmembrane segment at 41 to 61 threads the bilayer; that stretch reads ALGVEWVLRRMLLPCDKLLVS. Topologically, residues 62–88 are extracellular; that stretch reads LGASHFCLQSVVMGKTIYVFLYPMAFP. The chain crosses the membrane as a helical span at residues 89–109; it reads YNPVLQFLAFQWDFLNAATLW. The Cytoplasmic portion of the chain corresponds to 110 to 128; sequence FSTWLSVFYCVKIATFTHP. A helical membrane pass occupies residues 129-149; it reads VFFWLKHKLSGWLPWMIFSYV. The Extracellular portion of the chain corresponds to 150 to 183; that stretch reads GLSSFTTILFFIGNHRMYQNYLKNHLQPWNVTGN. The N-linked (GlcNAc...) asparagine glycan is linked to Asn179. A helical membrane pass occupies residues 184–204; sequence SIRSYCEKFYLFPLKMITWTM. Topologically, residues 205 to 234 are cytoplasmic; sequence PTAVFFICMILLITSLGRHMKKALLTTSGF. A helical transmembrane segment spans residues 235 to 255; it reads REPSVQAHIKALLALLSFAML. The Extracellular segment spans residues 256–264; sequence FISYFLSLV. The helical transmembrane segment at 265–285 threads the bilayer; it reads FSAAGIFPPLDFKFWVWESVI. The Cytoplasmic segment spans residues 286-318; sequence YLCAAVHPIILLFSNCRLRAVLKSRRSSRCGTP.

The protein belongs to the G-protein coupled receptor T2R family.

The protein localises to the membrane. Functionally, receptor that may play a role in the perception of bitterness and is gustducin-linked. May play a role in sensing the chemical composition of the gastrointestinal content. The activity of this receptor may stimulate alpha gustducin, mediate PLC-beta-2 activation and lead to the gating of TRPM5. The chain is Taste receptor type 2 member 60 (TAS2R60) from Pan paniscus (Pygmy chimpanzee).